A 363-amino-acid chain; its full sequence is Ethanolamine kinase 1 (363 aa).

The protein belongs to the choline/ethanolamine kinase family.

The protein localises to the cytoplasm. The catalysed reaction is ethanolamine + ATP = phosphoethanolamine + ADP + H(+). It functions in the pathway phospholipid metabolism; phosphatidylethanolamine biosynthesis; phosphatidylethanolamine from ethanolamine: step 1/3. Highly specific for ethanolamine phosphorylation. May be a rate-controlling step in phosphatidylethanolamine biosynthesis. The protein is Ethanolamine kinase 1 (Etnk1) of Mus musculus (Mouse).